A 1556-amino-acid polypeptide reads, in one-letter code: Ferredoxin-dependent glutamate synthase 2 (1556 aa).

Cysteine 37 functions as the For GATase activity in the catalytic mechanism. The region spanning 37–431 is the Glutamine amidotransferase type-2 domain; that stretch reads CGVGFIANLR…PGQMIAVDLA (395 aa). [3Fe-4S] cluster-binding residues include cysteine 1173, cysteine 1179, and cysteine 1184. Residues 1533 to 1556 are disordered; it reads PSEKDSPEANGDVSLTGEKTLTSV.

It belongs to the glutamate synthase family. Requires [3Fe-4S] cluster as cofactor. It depends on FAD as a cofactor. FMN serves as cofactor.

The catalysed reaction is 2 oxidized [2Fe-2S]-[ferredoxin] + 2 L-glutamate = L-glutamine + 2 reduced [2Fe-2S]-[ferredoxin] + 2-oxoglutarate + 2 H(+). It functions in the pathway amino-acid biosynthesis; L-glutamate biosynthesis via GLT pathway; L-glutamate from 2-oxoglutarate and L-glutamine (ferredoxin route): step 1/1. Its pathway is energy metabolism; nitrogen metabolism. This Synechocystis sp. (strain ATCC 27184 / PCC 6803 / Kazusa) protein is Ferredoxin-dependent glutamate synthase 2 (gltS).